The sequence spans 929 residues: Isoleucine--tRNA ligase (929 aa).

The 'HIGH' region motif lies at 58-68 (PYANGDIHIGH). Glu563 is a binding site for L-isoleucyl-5'-AMP. Positions 605-609 (KMSKS) match the 'KMSKS' region motif. Lys608 contributes to the ATP binding site. Residues Cys892, Cys895, Cys912, and Cys915 each coordinate Zn(2+).

Belongs to the class-I aminoacyl-tRNA synthetase family. IleS type 1 subfamily. As to quaternary structure, monomer. Requires Zn(2+) as cofactor.

Its subcellular location is the cytoplasm. The enzyme catalyses tRNA(Ile) + L-isoleucine + ATP = L-isoleucyl-tRNA(Ile) + AMP + diphosphate. Its function is as follows. Catalyzes the attachment of isoleucine to tRNA(Ile). As IleRS can inadvertently accommodate and process structurally similar amino acids such as valine, to avoid such errors it has two additional distinct tRNA(Ile)-dependent editing activities. One activity is designated as 'pretransfer' editing and involves the hydrolysis of activated Val-AMP. The other activity is designated 'posttransfer' editing and involves deacylation of mischarged Val-tRNA(Ile). The polypeptide is Isoleucine--tRNA ligase (Neisseria gonorrhoeae (strain ATCC 700825 / FA 1090)).